The following is a 1755-amino-acid chain: BCL-6 corepressor (1755 aa).

A disordered region spans residues 309 to 345 (NSKQPRVPSAKAVTSGLPGDTALLLPPSPRPSPRVHL). 4 positions are modified to phosphoserine: Ser336, Ser340, Ser365, and Ser367. Residues 388-438 (LSNGKYPKAPEGGEGAQPVPGHARKTAVQDRKDGSSPPLLEKQTVTKDVTD) form a disordered region. An N6-acetyllysine modification is found at Lys392. Position 423 is a phosphoserine (Ser423). Positions 498-514 (RSEIISTAPSSWVVPGP) are interaction with BCL6. Low complexity predominate over residues 557 to 578 (VSGSVSSAGRPASASPAPNANA). Disordered regions lie at residues 557-641 (VSGS…IFLS), 737-760 (ITKEEKPERRSRSHERARYEDPTL), 773-794 (TKLHPDVPTDKNLKPNPNWNQG), and 815-844 (AKTDTNVSKPSFAAESVGQSAEPPKPSVEP). A compositionally biased stretch (polar residues) spans 580–594 (GTKTSRSSVETTPSV). The segment covering 605 to 620 (PAKHSSSTSSKGAKAS) has biased composition (low complexity). A compositionally biased stretch (basic and acidic residues) spans 775–785 (LHPDVPTDKNL). Residue Lys786 forms a Glycyl lysine isopeptide (Lys-Gly) (interchain with G-Cter in SUMO2) linkage. Lys872 is covalently cross-linked (Glycyl lysine isopeptide (Lys-Gly) (interchain with G-Cter in SUMO2)). 2 disordered regions span residues 1071 to 1187 (IAEQ…EDPH) and 1220 to 1328 (QQVS…KENQ). Residues 1076 to 1107 (ESERCEYSVGNKHRDPFEAPEDKDLPVEKYFV) are compositionally biased toward basic and acidic residues. Residues Ser1127 and Ser1139 each carry the phosphoserine modification. Over residues 1166–1175 (SKDDWPEREM) the composition is skewed to basic and acidic residues. The segment covering 1238 to 1252 (TQATQPEAIPQGTNI) has biased composition (polar residues). Residues 1253 to 1279 (TEEKPGRKRAEAKGNRSWSEESLKPSD) are compositionally biased toward basic and acidic residues. Lys1256 is covalently cross-linked (Glycyl lysine isopeptide (Lys-Gly) (interchain with G-Cter in SUMO2)). A phosphoserine mark is found at Ser1290, Ser1345, and Ser1410. Lys1413 is covalently cross-linked (Glycyl lysine isopeptide (Lys-Gly) (interchain with G-Cter in SUMO2)). Positions 1430–1447 (QSTQLPCSSSPQETTQSR) are enriched in polar residues. The interval 1430 to 1451 (QSTQLPCSSSPQETTQSRPMPP) is disordered. ANK repeat units follow at residues 1462–1495 (AGETLLQRAARLGYEEVVLYCLENKICDVNHRDN), 1496–1525 (AGYCALHEACARGWLNIVRHLLEYGADVNC), and 1529–1558 (DGTRPLHDAVENDHLEIVRLLLSYGADPTL). The necessary and sufficient for interaction with PCGF1 stretch occupies residues 1634–1748 (SDVFEFEFSE…SSVEWLHPSD (115 aa)).

Belongs to the BCOR family. Interacts with BCL6; the interaction is direct. Forms ternary complexes with BCL6 and SMRT/NCOR2 on selected target genes promoters; potently repress expression. Can interact with HDAC1, HDAC3 and HDAC5. Interacts with PCGF1; the interaction is direct. Interacts with KDM2B. Component of an approximately 800 kDa repressive BCOR complex at least composed of BCOR, RYBP, PCGF1, RING1, RNF2/RING2, KDM2B and SKP1. Interacts with CPNE4 (via VWFA domain). Isoform 1 may interact with MLLT3/AF9. In terms of tissue distribution, ubiquitously expressed.

It localises to the nucleus. Its function is as follows. Transcriptional corepressor. May specifically inhibit gene expression when recruited to promoter regions by sequence-specific DNA-binding proteins such as BCL6 and MLLT3. This repression may be mediated at least in part by histone deacetylase activities which can associate with this corepressor. Involved in the repression of TFAP2A; impairs binding of BCL6 and KDM2B to TFAP2A promoter regions. Via repression of TFAP2A acts as a negative regulator of osteo-dentiogenic capacity in adult stem cells; the function implies inhibition of methylation on histone H3 'Lys-4' (H3K4me3) and 'Lys-36' (H3K36me2). This Homo sapiens (Human) protein is BCL-6 corepressor (BCOR).